A 439-amino-acid polypeptide reads, in one-letter code: Ribosomal protein uS12 methylthiotransferase RimO (439 aa).

Positions 2-114 (SKLYLMSLGC…VDEMILKKTN (113 aa)) constitute an MTTase N-terminal domain. [4Fe-4S] cluster-binding residues include cysteine 11, cysteine 45, cysteine 77, cysteine 146, cysteine 150, and cysteine 153. The region spanning 132–363 (TGSNSHAFIK…VNEVIEKSFE (232 aa)) is the Radical SAM core domain.

It belongs to the methylthiotransferase family. RimO subfamily. [4Fe-4S] cluster serves as cofactor.

The protein localises to the cytoplasm. The enzyme catalyses L-aspartate(89)-[ribosomal protein uS12]-hydrogen + (sulfur carrier)-SH + AH2 + 2 S-adenosyl-L-methionine = 3-methylsulfanyl-L-aspartate(89)-[ribosomal protein uS12]-hydrogen + (sulfur carrier)-H + 5'-deoxyadenosine + L-methionine + A + S-adenosyl-L-homocysteine + 2 H(+). Catalyzes the methylthiolation of an aspartic acid residue of ribosomal protein uS12. This is Ribosomal protein uS12 methylthiotransferase RimO from Campylobacter jejuni (strain RM1221).